The primary structure comprises 291 residues: MAGMKEIRGKIKSVQNTRKITKAMEMVAASKMRRAQERMRAARPYAEKVRAIAAHMSRANPEYRHPFMVANDGVKTAGMILVTTDKGLCGGLNTNVLRASLQKFKELEEQGQKVEATAIGGKGLGFLNRFGAKVISQVVHLGDTPHLDKLIGAVKTQLDLYSEGKLSAVYLAYTRFVNTMKQETVIEQLLPLSSEHFDTNDGTPATSWDYIYEPDAQAVVDELLVRYVEALVYQAVAENMASEQSARMVAMKAASDNAKTVISELQLSYNKSRQAAITKELSEIVGGAAAV.

The protein belongs to the ATPase gamma chain family. As to quaternary structure, F-type ATPases have 2 components, CF(1) - the catalytic core - and CF(0) - the membrane proton channel. CF(1) has five subunits: alpha(3), beta(3), gamma(1), delta(1), epsilon(1). CF(0) has three main subunits: a, b and c.

It is found in the cell inner membrane. Produces ATP from ADP in the presence of a proton gradient across the membrane. The gamma chain is believed to be important in regulating ATPase activity and the flow of protons through the CF(0) complex. The polypeptide is ATP synthase gamma chain (Burkholderia pseudomallei (strain 1106a)).